The sequence spans 457 residues: UDP-glycosyltransferase 708C2 (457 aa).

The active-site Proton acceptor is the H32. Position 32 (H32) interacts with an anthocyanidin. D129 (charge relay) is an active-site residue. T150 contributes to the UDP-alpha-D-glucose binding site. The tract at residues 279–280 (NR) is UDP. The UDP-alpha-D-glucose site is built by V341, Q343, H358, W361, N362, S363, and E366. An an anthocyanidin-binding site is contributed by G381. UDP-alpha-D-glucose is bound by residues D382 and Q383.

Belongs to the UDP-glycosyltransferase family. As to expression, expressed in cotyledons. Not detected in flowers, leaves, roots and hypocotyls.

The catalysed reaction is a 3'-hydro-2'-hydroxy-beta-oxodihydrochalcone + UDP-alpha-D-glucose = a 3'-(beta-D-glucopyranosyl)-2'-hydroxy-beta-oxodihydrochalcone + UDP + H(+). Its function is as follows. UDP-glucose-dependent glucosyltransferase catalyzing the c-glucosylation of 2-hydroxyflavanones (2-hydroxynaringenin, 2-hydroxyeriodictyol and 2-hydroxypinocembrin) and phloretin. No activity with flavanones, flavones or flavonols. This is UDP-glycosyltransferase 708C2 from Fagopyrum esculentum (Common buckwheat).